A 446-amino-acid chain; its full sequence is COBRA-like protein 1 (446 aa).

Positions 1-28 (MALLLLRMGVSVALLVAFFSSLIPSSEA) are cleaved as a signal peptide. Asparagine 37, asparagine 162, asparagine 170, asparagine 209, asparagine 234, asparagine 316, asparagine 331, asparagine 350, and asparagine 419 each carry an N-linked (GlcNAc...) asparagine glycan. Alanine 420 carries GPI-anchor amidated alanine lipidation. Residues 421–446 (STRVMSSILLPFITIWTALTFLMVYA) constitute a propeptide, removed in mature form.

Belongs to the COBRA family.

It localises to the cell membrane. Involved in determining the orientation of cell expansion, probably by playing an important role in cellulose deposition. May act by recruiting cellulose synthesizing complexes to discrete positions on the cell surface. The sequence is that of COBRA-like protein 1 (BC1L6) from Oryza sativa subsp. japonica (Rice).